We begin with the raw amino-acid sequence, 1009 residues long: Rho GTPase-activating protein gacT (1009 aa).

Disordered stretches follow at residues 1 to 72 (MKNI…SRNH) and 89 to 117 (TSHH…QQTQ). Positions 12–23 (FHKDKKEGDKQD) are enriched in basic and acidic residues. The span at 26–35 (GSSGSSGNSG) shows a compositional bias: low complexity. Over residues 58–69 (ESYSGDNSPTLS) the composition is skewed to polar residues. Residues 89 to 103 (TSHHSHSHNHNHNHN) are compositionally biased toward basic residues. Over residues 104 to 117 (HQLTQPIQQQQQTQ) the composition is skewed to low complexity. The Rho-GAP domain occupies 163–351 (VPLTQVPCRA…EVFPQHHLYY (189 aa)). Disordered stretches follow at residues 388 to 420 (TISG…DSTA), 432 to 482 (PEQQ…TFRV), and 508 to 571 (GPSG…TTDQ). 3 stretches are compositionally biased toward low complexity: residues 394 to 415 (PSNG…ITSP), 432 to 468 (PEQQ…QPIS), and 512 to 521 (TTGTTPNGGS). Gly residues predominate over residues 522–546 (LSIGGGNGGNGGSSLSVGSGGGNGG). The span at 547 to 557 (SSLSVGSNTSV) shows a compositional bias: low complexity. Positions 580 to 656 (AYTNNEDTKA…IEREIEKKRL (77 aa)) form a coiled coil. A disordered region spans residues 686–713 (ISTIDGSGGSNRNSKNYGNGSSSSSNRR). A compositionally biased stretch (low complexity) spans 695-713 (SNRNSKNYGNGSSSSSNRR). Residues 715–743 (SNTINQQLQMQLQQLQIQQQQYQQTQQSQ) are a coiled coil. Positions 759 to 781 (TTTTTTTSSGSNRFSSNRYKPVD) are disordered. Over residues 766 to 781 (SSGSNRFSSNRYKPVD) the composition is skewed to polar residues. Residues 839–952 (ENLVLLQQQY…IEEIHLLETY (114 aa)) adopt a coiled-coil conformation. The interval 965 to 1009 (STTKDLLTRSRSPTLPSSINMSTSSLGSSSSSAYNNNNNNNNVPK) is disordered. Residues 967–980 (TKDLLTRSRSPTLP) show a composition bias toward polar residues. Positions 981–1009 (SSINMSTSSLGSSSSSAYNNNNNNNNVPK) are enriched in low complexity.

The protein localises to the cytoplasm. Rho GTPase-activating protein involved in the signal transduction pathway. The sequence is that of Rho GTPase-activating protein gacT (gacT) from Dictyostelium discoideum (Social amoeba).